The sequence spans 159 residues: NADH-quinone oxidoreductase subunit B (159 aa).

The [4Fe-4S] cluster site is built by cysteine 37, cysteine 38, cysteine 102, and cysteine 132.

Belongs to the complex I 20 kDa subunit family. In terms of assembly, NDH-1 is composed of 14 different subunits. Subunits NuoB, C, D, E, F, and G constitute the peripheral sector of the complex. It depends on [4Fe-4S] cluster as a cofactor.

It is found in the cell inner membrane. The enzyme catalyses a quinone + NADH + 5 H(+)(in) = a quinol + NAD(+) + 4 H(+)(out). In terms of biological role, NDH-1 shuttles electrons from NADH, via FMN and iron-sulfur (Fe-S) centers, to quinones in the respiratory chain. Couples the redox reaction to proton translocation (for every two electrons transferred, four hydrogen ions are translocated across the cytoplasmic membrane), and thus conserves the redox energy in a proton gradient. The sequence is that of NADH-quinone oxidoreductase subunit B from Ruthia magnifica subsp. Calyptogena magnifica.